The sequence spans 496 residues: NADP-dependent glyceraldehyde-3-phosphate dehydrogenase (496 aa).

Residues R116 and 169 to 170 (NY) each bind substrate. K192, T195, and D230 together coordinate NADP(+). 245–249 (GGDTG) serves as a coordination point for NAD(+). E264 serves as the catalytic Proton acceptor. 297–299 (RCT) is a binding site for substrate. The active-site Nucleophile is the C298. E391 is a binding site for NADP(+). The residue at position 404 (S404) is a Phosphoserine. R451 contacts substrate.

This sequence belongs to the aldehyde dehydrogenase family. Interacts with 14-3-3 protein when phosphorylated. This interaction is released by divalent cations. In terms of processing, phosphorylated in shoots and non-photosynthetic tissues, but not in leaves.

It localises to the cytoplasm. The enzyme catalyses D-glyceraldehyde 3-phosphate + NADP(+) + H2O = (2R)-3-phosphoglycerate + NADPH + 2 H(+). With respect to regulation, insensitive to magnesium or calcium when dephosphorylated. When phosphorylated, 3-fold activation by magnesium or calcium, 2-fold activation by potassium, inhibited by ADP and AMP and insensitive to ATP or PPi. Important as a means of generating NADPH for biosynthetic reactions. The sequence is that of NADP-dependent glyceraldehyde-3-phosphate dehydrogenase (GAPN) from Triticum aestivum (Wheat).